A 323-amino-acid chain; its full sequence is Ferrochelatase (323 aa).

The Fe cation site is built by H196 and E277.

It belongs to the ferrochelatase family.

The protein resides in the cytoplasm. It catalyses the reaction heme b + 2 H(+) = protoporphyrin IX + Fe(2+). Its pathway is porphyrin-containing compound metabolism; protoheme biosynthesis; protoheme from protoporphyrin-IX: step 1/1. Its function is as follows. Catalyzes the ferrous insertion into protoporphyrin IX. The sequence is that of Ferrochelatase from Haemophilus influenzae (strain PittEE).